We begin with the raw amino-acid sequence, 516 residues long: uncharacterized protein (516 aa).

This sequence to H.influenzae HI_0521.

This is an uncharacterized protein from Escherichia coli (strain K12).